A 91-amino-acid chain; its full sequence is Antifungal protein opdH (91 aa).

The first 18 residues, 1–18 (MQFSSLSLVFLAVIGAIA), serve as a signal peptide directing secretion. A propeptide spanning residues 19–33 (NPIAVDSELENRDVQ) is cleaved from the precursor. Intrachain disulfides connect C41–C69, C48–C76, and C61–C87.

Belongs to the antifungal protein pafB family.

The protein resides in the secreted. Its subcellular location is the host cytoplasm. Antifungal protein; part of the gene cluster that mediates the biosynthesis of oxopyrrolidines, polyketide-amino acid hybrid compounds with feature structures of tetramic acid. Acts as an inhibitor of growth of various molds and yeasts. The protein is Antifungal protein opdH of Penicillium oxalicum (strain 114-2 / CGMCC 5302) (Penicillium decumbens).